Reading from the N-terminus, the 398-residue chain is Exodeoxyribonuclease 7 large subunit (398 aa).

It belongs to the XseA family. As to quaternary structure, heterooligomer composed of large and small subunits.

The protein localises to the cytoplasm. It carries out the reaction Exonucleolytic cleavage in either 5'- to 3'- or 3'- to 5'-direction to yield nucleoside 5'-phosphates.. Functionally, bidirectionally degrades single-stranded DNA into large acid-insoluble oligonucleotides, which are then degraded further into small acid-soluble oligonucleotides. The sequence is that of Exodeoxyribonuclease 7 large subunit from Anaplasma phagocytophilum (strain HZ).